The primary structure comprises 88 residues: ATP synthase subunit 9, mitochondrial (88 aa).

Transmembrane regions (helical) follow at residues 8 to 28 and 45 to 72; these read IGAG…GNVF and LFGY…LILF.

It belongs to the ATPase C chain family. In terms of assembly, F-type ATPases have 2 components, CF(1) - the catalytic core - and CF(0) - the membrane proton channel. CF(1) has five subunits: alpha(3), beta(3), gamma(1), delta(1), epsilon(1). CF(0) has three main subunits: a, b and c.

The protein resides in the mitochondrion membrane. The enzyme catalyses ATP + H2O + 4 H(+)(in) = ADP + phosphate + 5 H(+)(out). Its function is as follows. This protein is one of the chains of the nonenzymatic membrane component (F0) of mitochondrial ATPase. The protein is ATP synthase subunit 9, mitochondrial (ATP9) of Beta vulgaris (Sugar beet).